The primary structure comprises 435 residues: Glutamate-1-semialdehyde 2,1-aminomutase (435 aa).

The residue at position 266 (K266) is an N6-(pyridoxal phosphate)lysine.

Belongs to the class-III pyridoxal-phosphate-dependent aminotransferase family. HemL subfamily. Homodimer. Pyridoxal 5'-phosphate is required as a cofactor.

It localises to the cytoplasm. The catalysed reaction is (S)-4-amino-5-oxopentanoate = 5-aminolevulinate. Its pathway is porphyrin-containing compound metabolism; protoporphyrin-IX biosynthesis; 5-aminolevulinate from L-glutamyl-tRNA(Glu): step 2/2. This chain is Glutamate-1-semialdehyde 2,1-aminomutase, found in Coxiella burnetii (strain CbuG_Q212) (Coxiella burnetii (strain Q212)).